Consider the following 152-residue polypeptide: Deoxyuridine 5'-triphosphate nucleotidohydrolase (152 aa).

Substrate contacts are provided by residues 72-74 (RSG), Asn85, and 89-91 (TID).

This sequence belongs to the dUTPase family. The cofactor is Mg(2+).

It catalyses the reaction dUTP + H2O = dUMP + diphosphate + H(+). The protein operates within pyrimidine metabolism; dUMP biosynthesis; dUMP from dCTP (dUTP route): step 2/2. In terms of biological role, this enzyme is involved in nucleotide metabolism: it produces dUMP, the immediate precursor of thymidine nucleotides and it decreases the intracellular concentration of dUTP so that uracil cannot be incorporated into DNA. This is Deoxyuridine 5'-triphosphate nucleotidohydrolase from Rhodopseudomonas palustris (strain BisB5).